Here is a 165-residue protein sequence, read N- to C-terminus: Xanthine-guanine phosphoribosyltransferase (165 aa).

5-phospho-alpha-D-ribose 1-diphosphate is bound by residues 41-42 (RG) and 98-106 (DDLTDTGKT). Asp-99 is a binding site for Mg(2+). Guanine is bound by residues Asp-102 and Ile-145. Xanthine is bound by residues Asp-102 and Ile-145. GMP is bound by residues 102 to 106 (DTGKT) and 144 to 145 (WI).

It belongs to the purine/pyrimidine phosphoribosyltransferase family. XGPT subfamily. Homotetramer. Requires Mg(2+) as cofactor.

It is found in the cell inner membrane. The catalysed reaction is GMP + diphosphate = guanine + 5-phospho-alpha-D-ribose 1-diphosphate. It carries out the reaction XMP + diphosphate = xanthine + 5-phospho-alpha-D-ribose 1-diphosphate. The enzyme catalyses IMP + diphosphate = hypoxanthine + 5-phospho-alpha-D-ribose 1-diphosphate. Its pathway is purine metabolism; GMP biosynthesis via salvage pathway; GMP from guanine: step 1/1. The protein operates within purine metabolism; XMP biosynthesis via salvage pathway; XMP from xanthine: step 1/1. Purine salvage pathway enzyme that catalyzes the transfer of the ribosyl-5-phosphate group from 5-phospho-alpha-D-ribose 1-diphosphate (PRPP) to the N9 position of the 6-oxopurines guanine and xanthine to form the corresponding ribonucleotides GMP (guanosine 5'-monophosphate) and XMP (xanthosine 5'-monophosphate), with the release of PPi. To a lesser extent, also acts on hypoxanthine. This is Xanthine-guanine phosphoribosyltransferase from Brucella anthropi (strain ATCC 49188 / DSM 6882 / CCUG 24695 / JCM 21032 / LMG 3331 / NBRC 15819 / NCTC 12168 / Alc 37) (Ochrobactrum anthropi).